A 138-amino-acid polypeptide reads, in one-letter code: Nucleoside diphosphate kinase (138 aa).

The ATP site is built by Lys9, Phe57, Arg85, Thr91, Arg102, and Asn112. The active-site Pros-phosphohistidine intermediate is the His120.

Belongs to the NDK family. As to quaternary structure, homotetramer. Mg(2+) serves as cofactor.

It localises to the cytoplasm. The enzyme catalyses a 2'-deoxyribonucleoside 5'-diphosphate + ATP = a 2'-deoxyribonucleoside 5'-triphosphate + ADP. It carries out the reaction a ribonucleoside 5'-diphosphate + ATP = a ribonucleoside 5'-triphosphate + ADP. In terms of biological role, major role in the synthesis of nucleoside triphosphates other than ATP. The ATP gamma phosphate is transferred to the NDP beta phosphate via a ping-pong mechanism, using a phosphorylated active-site intermediate. The polypeptide is Nucleoside diphosphate kinase (Streptococcus agalactiae serotype V (strain ATCC BAA-611 / 2603 V/R)).